Reading from the N-terminus, the 151-residue chain is Globin-2 B chain (151 aa).

At Ser-1 the chain carries N-acetylserine. The 141-residue stretch at 11-151 (VSNADQKDLL…SLVAVVQASL (141 aa)) folds into the Globin domain. Position 103 (His-103) interacts with heme b.

The protein belongs to the globin family. In terms of assembly, heterotetramer of two alpha chains and two beta chains.

The polypeptide is Globin-2 B chain (Anadara inaequivalvis (Inequivalve ark)).